Here is a 238-residue protein sequence, read N- to C-terminus: Orotidine 5'-phosphate decarboxylase (238 aa).

Substrate-binding positions include Asp10, Lys32, 59–68 (DLKLHDIPNT), Thr122, Arg184, Gln193, Gly213, and Arg214. Lys61 serves as the catalytic Proton donor.

It belongs to the OMP decarboxylase family. Type 1 subfamily. Homodimer.

It carries out the reaction orotidine 5'-phosphate + H(+) = UMP + CO2. The protein operates within pyrimidine metabolism; UMP biosynthesis via de novo pathway; UMP from orotate: step 2/2. Catalyzes the decarboxylation of orotidine 5'-monophosphate (OMP) to uridine 5'-monophosphate (UMP). The sequence is that of Orotidine 5'-phosphate decarboxylase from Bacillus cereus (strain ZK / E33L).